The chain runs to 715 residues: Polyribonucleotide nucleotidyltransferase (715 aa).

Mg(2+) is bound by residues aspartate 488 and aspartate 494. The region spanning 555–614 (PRIEVMHIPTDKIRDVIGTGGKVIREIVEKTGAKINIEDDGTVKIASSNGKEIEAARKWI) is the KH domain. The S1 motif domain maps to 624-692 (GEIYEGTVVK…ERGKVRLSMK (69 aa)).

Belongs to the polyribonucleotide nucleotidyltransferase family. Mg(2+) serves as cofactor.

It localises to the cytoplasm. It catalyses the reaction RNA(n+1) + phosphate = RNA(n) + a ribonucleoside 5'-diphosphate. Involved in mRNA degradation. Catalyzes the phosphorolysis of single-stranded polyribonucleotides processively in the 3'- to 5'-direction. This chain is Polyribonucleotide nucleotidyltransferase, found in Chelativorans sp. (strain BNC1).